Consider the following 212-residue polypeptide: Outer surface protein C (212 aa).

The N-terminal stretch at 1-18 (MKKNTLSAILMTLFLFIS) is a signal peptide. Cys19 carries N-palmitoyl cysteine lipidation. Residue Cys19 is the site of S-diacylglycerol cysteine attachment.

Belongs to the OspC lipoprotein family. In terms of assembly, homodimer. Interacts with tick Ixodes ricinus salivary protein Iric-1. Binds human (host) plasminogen. Post-translationally, the N-terminus is blocked.

The protein resides in the cell outer membrane. It localises to the cell surface. Functionally, major immunodominant protein in mammalian hosts. Required for initial stages of mammalian infection. Inhibits macrophage-mediated phagocytosis of the bacteria. Binds human plasminogen; this probably confers an extracellular protease activity on the bacteria that allows it to traverse tissue. Unlike closely related strain B31, its interaction with Ixodes ricinus salivary protein Iric-1 does not protect against antibody-mediated destruction in vitro. This Borreliella afzelii (strain PKo) (Borrelia afzelii) protein is Outer surface protein C.